The following is an 88-amino-acid chain: Small ribosomal subunit protein uS19 (88 aa).

It belongs to the universal ribosomal protein uS19 family.

Protein S19 forms a complex with S13 that binds strongly to the 16S ribosomal RNA. In Chlamydia felis (strain Fe/C-56) (Chlamydophila felis), this protein is Small ribosomal subunit protein uS19.